Consider the following 372-residue polypeptide: Glutamate 5-kinase (372 aa).

ATP is bound at residue Lys9. Substrate contacts are provided by Ser49, Asp136, and Asn148. Residues 168 to 169 and 210 to 216 contribute to the ATP site; these read TD and TGGMKSK. The PUA domain maps to 276-353; it reads AGSIEIDSGA…EEALSLTKRS (78 aa).

This sequence belongs to the glutamate 5-kinase family.

It localises to the cytoplasm. The catalysed reaction is L-glutamate + ATP = L-glutamyl 5-phosphate + ADP. It participates in amino-acid biosynthesis; L-proline biosynthesis; L-glutamate 5-semialdehyde from L-glutamate: step 1/2. In terms of biological role, catalyzes the transfer of a phosphate group to glutamate to form L-glutamate 5-phosphate. This chain is Glutamate 5-kinase, found in Shouchella clausii (strain KSM-K16) (Alkalihalobacillus clausii).